Consider the following 425-residue polypeptide: Histidine--tRNA ligase (425 aa).

The protein belongs to the class-II aminoacyl-tRNA synthetase family. Homodimer.

The protein resides in the cytoplasm. The enzyme catalyses tRNA(His) + L-histidine + ATP = L-histidyl-tRNA(His) + AMP + diphosphate + H(+). The sequence is that of Histidine--tRNA ligase from Histophilus somni (strain 2336) (Haemophilus somnus).